Reading from the N-terminus, the 271-residue chain is Shikimate dehydrogenase (NADP(+)) (271 aa).

Residues 14 to 16 (SLS) and Thr-61 contribute to the shikimate site. The active-site Proton acceptor is Lys-65. Positions 86 and 101 each coordinate shikimate. Residues 125–129 (GAGGA) and Ile-212 contribute to the NADP(+) site. Residue Tyr-214 participates in shikimate binding. An NADP(+)-binding site is contributed by Gly-235.

It belongs to the shikimate dehydrogenase family. In terms of assembly, homodimer.

The catalysed reaction is shikimate + NADP(+) = 3-dehydroshikimate + NADPH + H(+). Its pathway is metabolic intermediate biosynthesis; chorismate biosynthesis; chorismate from D-erythrose 4-phosphate and phosphoenolpyruvate: step 4/7. In terms of biological role, involved in the biosynthesis of the chorismate, which leads to the biosynthesis of aromatic amino acids. Catalyzes the reversible NADPH linked reduction of 3-dehydroshikimate (DHSA) to yield shikimate (SA). The polypeptide is Shikimate dehydrogenase (NADP(+)) (Clostridium perfringens (strain SM101 / Type A)).